A 414-amino-acid polypeptide reads, in one-letter code: Esterase FrsA (414 aa).

Belongs to the FrsA family.

The enzyme catalyses a carboxylic ester + H2O = an alcohol + a carboxylate + H(+). Catalyzes the hydrolysis of esters. This Escherichia coli O8 (strain IAI1) protein is Esterase FrsA.